Consider the following 973-residue polypeptide: NLR family member X1 (973 aa).

The transit peptide at 1-84 directs the protein to the mitochondrion; the sequence is MRWGCHLPRT…EAIQRHRRNL (84 aa). The tract at residues 73–554 is required for interaction with MAVS; that stretch reads ATEAIQRHRR…RILPLLFNLL (482 aa). Residues 158–481 enclose the NACHT domain; the sequence is QTVVLYGTVG…LRFFLAPCVE (324 aa). 164–171 contributes to the ATP binding site; sequence GTVGTGKS. Residues 554 to 972 form a required for the repression of MAVS-induced interferon signaling region; the sequence is LKVVPRVFGR…TLLEQLGGSG (419 aa). Residues 665–692 form the LRRNT domain; it reads RQVLPPSELLDHLFFHYEFQNQRFSAEV. LRR repeat units lie at residues 693-716, 722-745, 747-775, 776-799, 809-832, 833-855, 856-875, and 876-897; these read LGSL…VVAS, RHPL…TLMP, LLRA…LLHD, QCQI…VLMD, HLSL…LDRN, KQLQ…ALAK, AARK…ELSS, and EGRQ…VVAS. The region spanning 904–968 is the LRRCT domain; that stretch reads VSEYWSVILS…SEVKTLLEQL (65 aa).

This sequence belongs to the NLRP family. Homohexamer. Interacts with MAVS. Interacts with TUFM.

The protein resides in the mitochondrion outer membrane. In terms of biological role, participates in antiviral signaling. Acts as a negative regulator of MAVS-mediated antiviral responses, through the inhibition of the virus-induced RLH (RIG-like helicase)-MAVS interaction. Instead, promotes autophagy by interacting with TUFM and subsequently recruiting the autophagy-related proteins ATG5 and ATG12. Also regulates MAVS-dependent NLRP3 inflammasome activation to attenuate apoptosis. Has no inhibitory function on NF-kappa-B signaling pathway, but enhances NF-kappa-B and JUN N-terminal kinase dependent signaling through the production of reactive oxygen species. Regulates viral mediated-inflammation and energy metabolism in a sex-dependent manner. In females, prevents uncontrolled inflammation and energy metabolism and thus, may contribute to the sex differences observed in infectious and inflammatory diseases. This Rattus norvegicus (Rat) protein is NLR family member X1 (Nlrx1).